The sequence spans 140 residues: Endoribonuclease YbeY (140 aa).

Zn(2+)-binding residues include histidine 100, histidine 104, and histidine 110.

Belongs to the endoribonuclease YbeY family. Zn(2+) is required as a cofactor.

The protein resides in the cytoplasm. Single strand-specific metallo-endoribonuclease involved in late-stage 70S ribosome quality control and in maturation of the 3' terminus of the 16S rRNA. The protein is Endoribonuclease YbeY of Helicobacter pylori (strain P12).